Consider the following 1220-residue polypeptide: Post-transcriptional regulator MKT1L (1220 aa).

The tract at residues 1–107 (MRKAGANRNN…SPWNSPPQQT (107 aa)) is disordered. Positions 34-70 (PHHHQHQHHHQHQHQHQHQHQHPHQHPHQHHHHHPHH) are enriched in basic residues.

It belongs to the XPG/RAD2 endonuclease family. In terms of assembly, forms a complex composed of at least MKT1L, PBP1, XAC1 and LSM12.

It is found in the cytoplasm. In terms of biological role, involved in post-transcriptional regulation of gene expression. The sequence is that of Post-transcriptional regulator MKT1L from Trypanosoma brucei brucei (strain 927/4 GUTat10.1).